The following is a 469-amino-acid chain: Transcription factor phomD' (469 aa).

Positions 14-41 (CNACNESKVRCSQRKPTCARCERNGVEC) form a DNA-binding region, zn(2)-C6 fungal-type. A disordered region spans residues 49 to 118 (THKDAPPISM…QQKDEAAAAA (70 aa)). A compositionally biased stretch (polar residues) spans 82-93 (KANSNSSSNWHM). Over residues 104–118 (QQQQQQQKDEAAAAA) the composition is skewed to low complexity.

It localises to the nucleus. Its function is as follows. Transcription factor; part of the gene cluster that mediates the biosynthesis of the phomopsins, a group of hexapeptide mycotoxins which infects lupins and causes lupinosis disease in livestock. May play a role in the regulation of the production of phomopsins. The chain is Transcription factor phomD' from Diaporthe leptostromiformis (Lupinosis disease fungus).